We begin with the raw amino-acid sequence, 241 residues long: Carboxy-S-adenosyl-L-methionine synthase (241 aa).

S-adenosyl-L-methionine is bound by residues tyrosine 38, 63-65, 88-89, 116-117, asparagine 131, and arginine 198; these read GCS, DN, and DI.

Belongs to the class I-like SAM-binding methyltransferase superfamily. Cx-SAM synthase family. As to quaternary structure, homodimer.

The catalysed reaction is prephenate + S-adenosyl-L-methionine = carboxy-S-adenosyl-L-methionine + 3-phenylpyruvate + H2O. Its function is as follows. Catalyzes the conversion of S-adenosyl-L-methionine (SAM) to carboxy-S-adenosyl-L-methionine (Cx-SAM). The chain is Carboxy-S-adenosyl-L-methionine synthase from Haemophilus influenzae (strain 86-028NP).